A 137-amino-acid polypeptide reads, in one-letter code: MRHGKAHRKLGRTSAHRTAMFANMSASLIKHEQIVTTLPKAKELRPIVEKLVTLAKRGDLHARRQAISSVRDVEQVGKLFAVLGPRYKERQGGYIRVLKAGFRYGDNAPMAVIEFVDRDVSEKGKDSGPVYVNDAED.

This sequence belongs to the bacterial ribosomal protein bL17 family. As to quaternary structure, part of the 50S ribosomal subunit. Contacts protein L32.

This chain is Large ribosomal subunit protein bL17, found in Caulobacter vibrioides (strain ATCC 19089 / CIP 103742 / CB 15) (Caulobacter crescentus).